A 412-amino-acid chain; its full sequence is Subtilisin-like protease 6 (412 aa).

Residues methionine 1–glycine 20 form the signal peptide. Positions alanine 21–leucine 127 are excised as a propeptide. An Inhibitor I9 domain is found at lysine 36–alanine 120. N-linked (GlcNAc...) asparagine glycans are attached at residues asparagine 123 and asparagine 126. The Peptidase S8 domain maps to serine 135–lysine 412. Residues aspartate 167 and histidine 198 each act as charge relay system in the active site. Asparagine 252, asparagine 264, and asparagine 325 each carry an N-linked (GlcNAc...) asparagine glycan. Serine 358 acts as the Charge relay system in catalysis. The N-linked (GlcNAc...) asparagine glycan is linked to asparagine 408.

This sequence belongs to the peptidase S8 family.

Its subcellular location is the secreted. Secreted subtilisin-like serine protease with keratinolytic activity that contributes to pathogenicity. The sequence is that of Subtilisin-like protease 6 (SUB6) from Trichophyton verrucosum (Cattle ringworm fungus).